Reading from the N-terminus, the 200-residue chain is MKILVTGFDPFGGEKINPAIEAVKRLPDEIAGNQIIKLEVPTIFYQSAEVVKKAIEKENPEMVINVGQAGGRSAITPERIAINFQAGSTPDNSGKGPKEGKIQADGLDGYFTQLPIKKMVAAIRHAGLPAQVSNSAGTYVCNHLFYEIQYLIHHDYPNLKAGFIHIPYLPSQARNGRYPSMSLDNMVTGLTVAIETAAMC.

Residues Glu-78, Cys-141, and His-165 contribute to the active site.

This sequence belongs to the peptidase C15 family. As to quaternary structure, homotetramer.

The protein resides in the cytoplasm. It catalyses the reaction Release of an N-terminal pyroglutamyl group from a polypeptide, the second amino acid generally not being Pro.. In terms of biological role, removes 5-oxoproline from various penultimate amino acid residues except L-proline. In Lactobacillus helveticus (strain DPC 4571), this protein is Pyrrolidone-carboxylate peptidase.